Here is a 227-residue protein sequence, read N- to C-terminus: MGITGMVYVVTMVFLLIVLILSSSTVGYDYFQFTQQYQLAVCNSNRTPCKDPPDKLFTVHGLWPSSMAGPDPSNCPIRNIRKREKLLEPQLAIIWPNVFDRTKNKLFWDKEWMKHGTCGYPTIDNENHYFETVIKMYISKKQNVSRILSKAKIEPDGKKRALLDIENAIRNGADNKKPKLKCQKKGTTTELVEITLCSDKSGEHFIDCPHPFEPISPHYCPTNNIKY.

Residues Met-1–Gly-27 form the signal peptide. Gln-36 is a binding site for RNA. A disulfide bridge links Cys-42 with Cys-49. Asn-45 carries N-linked (GlcNAc...) asparagine glycosylation. Residues His-60, Asn-97–Val-98, Phe-107, Lys-110–Glu-111, and Lys-114–His-115 each bind RNA. His-60 acts as the Proton donor in catalysis. A disulfide bond links Cys-75 and Cys-118. The active site involves Glu-111. The active-site Proton acceptor is His-115. An N-linked (GlcNAc...) asparagine glycan is attached at Asn-143. Cystine bridges form between Cys-182-Cys-220 and Cys-197-Cys-208.

Belongs to the RNase T2 family. In terms of processing, N-glycan at Asn-45 consists of disaccharide (GlcNAc-GlcNAc). N-linked core structure at Asn-143 contains xylose.

It catalyses the reaction a ribonucleotidyl-ribonucleotide-RNA + H2O = a 3'-end 3'-phospho-ribonucleotide-RNA + a 5'-end dephospho-ribonucleoside-RNA + H(+). Self-incompatibility (SI) is the inherited ability of a flowering plant to prevent self-fertilization by discriminating between self and non-self pollen during pollination. In many species, self-incompatibility is controlled by the single, multiallelic locus S. In Pyrus pyrifolia (Chinese pear), this protein is Ribonuclease S-5.